A 149-amino-acid chain; its full sequence is FAD synthase (149 aa).

ATP-binding positions include 9 to 10 (TF), 14 to 17 (HPGH), Asn-92, and Tyr-119.

Belongs to the archaeal FAD synthase family. Homodimer. The cofactor is a divalent metal cation.

It catalyses the reaction FMN + ATP + H(+) = FAD + diphosphate. The protein operates within cofactor biosynthesis; FAD biosynthesis; FAD from FMN: step 1/1. Functionally, catalyzes the transfer of the AMP portion of ATP to flavin mononucleotide (FMN) to produce flavin adenine dinucleotide (FAD) coenzyme. The protein is FAD synthase of Methanoculleus marisnigri (strain ATCC 35101 / DSM 1498 / JR1).